We begin with the raw amino-acid sequence, 231 residues long: 2-phospho-L-lactate guanylyltransferase (231 aa).

Belongs to the CofC family. As to quaternary structure, homodimer.

It catalyses the reaction (2S)-2-phospholactate + GTP + H(+) = (2S)-lactyl-2-diphospho-5'-guanosine + diphosphate. It functions in the pathway cofactor biosynthesis; coenzyme F420 biosynthesis. In terms of biological role, guanylyltransferase that catalyzes the activation of (2S)-2-phospholactate (2-PL) as (2S)-lactyl-2-diphospho-5'-guanosine, via the condensation of 2-PL with GTP. It is involved in the biosynthesis of coenzyme F420, a hydride carrier cofactor. The protein is 2-phospho-L-lactate guanylyltransferase of Haloterrigena turkmenica (strain ATCC 51198 / DSM 5511 / JCM 9101 / NCIMB 13204 / VKM B-1734 / 4k) (Halococcus turkmenicus).